The following is an 876-amino-acid chain: Valine--tRNA ligase (876 aa).

A 'HIGH' region motif is present at residues proline 43–histidine 53. Residues lysine 534–serine 538 carry the 'KMSKS' region motif. Lysine 537 contacts ATP. Residues proline 847–serine 876 adopt a coiled-coil conformation.

The protein belongs to the class-I aminoacyl-tRNA synthetase family. ValS type 1 subfamily. In terms of assembly, monomer.

The protein localises to the cytoplasm. The enzyme catalyses tRNA(Val) + L-valine + ATP = L-valyl-tRNA(Val) + AMP + diphosphate. In terms of biological role, catalyzes the attachment of valine to tRNA(Val). As ValRS can inadvertently accommodate and process structurally similar amino acids such as threonine, to avoid such errors, it has a 'posttransfer' editing activity that hydrolyzes mischarged Thr-tRNA(Val) in a tRNA-dependent manner. The chain is Valine--tRNA ligase from Christiangramia forsetii (strain DSM 17595 / CGMCC 1.15422 / KT0803) (Gramella forsetii).